We begin with the raw amino-acid sequence, 152 residues long: Deoxyuridine 5'-triphosphate nucleotidohydrolase (152 aa).

Substrate-binding positions include 71–73, Asn-84, 88–90, and Met-98; these read RSG and LID.

The protein belongs to the dUTPase family. Requires Mg(2+) as cofactor.

The catalysed reaction is dUTP + H2O = dUMP + diphosphate + H(+). It functions in the pathway pyrimidine metabolism; dUMP biosynthesis; dUMP from dCTP (dUTP route): step 2/2. Functionally, this enzyme is involved in nucleotide metabolism: it produces dUMP, the immediate precursor of thymidine nucleotides and it decreases the intracellular concentration of dUTP so that uracil cannot be incorporated into DNA. This chain is Deoxyuridine 5'-triphosphate nucleotidohydrolase, found in Shewanella baltica (strain OS185).